A 328-amino-acid polypeptide reads, in one-letter code: tRNA uridine(34) hydroxylase (328 aa).

In terms of domain architecture, Rhodanese spans 130–224; that stretch reads LDEDTVVLDT…YGKDPEVQGE (95 aa). Cys184 acts as the Cysteine persulfide intermediate in catalysis.

This sequence belongs to the TrhO family.

It carries out the reaction uridine(34) in tRNA + AH2 + O2 = 5-hydroxyuridine(34) in tRNA + A + H2O. Its function is as follows. Catalyzes oxygen-dependent 5-hydroxyuridine (ho5U) modification at position 34 in tRNAs. In Streptococcus pyogenes serotype M12 (strain MGAS2096), this protein is tRNA uridine(34) hydroxylase.